A 713-amino-acid polypeptide reads, in one-letter code: Glutamine--fructose-6-phosphate aminotransferase [isomerizing] (713 aa).

Residue Cys-2 is the For GATase activity of the active site. Residues 2-316 form the Glutamine amidotransferase type-2 domain; the sequence is CGIFGYVNFL…DDDIAHIYDG (315 aa). 2 SIS domains span residues 389–528 and 561–703; these read WLST…DSIS and CNSS…VDFP.

As to quaternary structure, homotetramer.

The catalysed reaction is D-fructose 6-phosphate + L-glutamine = D-glucosamine 6-phosphate + L-glutamate. It participates in nucleotide-sugar biosynthesis; UDP-N-acetyl-alpha-D-glucosamine biosynthesis; alpha-D-glucosamine 6-phosphate from D-fructose 6-phosphate: step 1/1. Its function is as follows. Involved in amino sugar synthesis (formation of chitin, supplies the amino sugars of asparagine-linked oligosaccharides of glycoproteins). The chain is Glutamine--fructose-6-phosphate aminotransferase [isomerizing] (GFA1) from Candida albicans (strain SC5314 / ATCC MYA-2876) (Yeast).